The following is a 299-amino-acid chain: Small ribosomal subunit protein uS2 (299 aa).

Positions 259 to 291 (AAASAAGPTSWEADGADWAASSAPAAAGESWAE) are enriched in low complexity. The tract at residues 259–299 (AAASAAGPTSWEADGADWAASSAPAAAGESWAETQPAEGKW) is disordered.

The protein belongs to the universal ribosomal protein uS2 family. In terms of assembly, component of the small ribosomal subunit. Mature ribosomes consist of a small (40S) and a large (60S) subunit. The 40S subunit contains about 33 different proteins and 1 molecule of RNA (18S). The 60S subunit contains about 49 different proteins and 3 molecules of RNA (25S, 5.8S and 5S). Interacts with rps21.

It is found in the cytoplasm. Its function is as follows. Required for the assembly and/or stability of the 40S ribosomal subunit. Required for the processing of the 20S rRNA-precursor to mature 18S rRNA in a late step of the maturation of 40S ribosomal subunits. This chain is Small ribosomal subunit protein uS2 (rps0), found in Aspergillus flavus (strain ATCC 200026 / FGSC A1120 / IAM 13836 / NRRL 3357 / JCM 12722 / SRRC 167).